A 262-amino-acid polypeptide reads, in one-letter code: Putative carbamate hydrolase RutD (262 aa).

The protein belongs to the AB hydrolase superfamily. Hydrolase RutD family.

The catalysed reaction is carbamate + 2 H(+) = NH4(+) + CO2. In terms of biological role, involved in pyrimidine catabolism. May facilitate the hydrolysis of carbamate, a reaction that can also occur spontaneously. The chain is Putative carbamate hydrolase RutD from Rhizobium rhizogenes (strain K84 / ATCC BAA-868) (Agrobacterium radiobacter).